The chain runs to 516 residues: MNLFRALLTVSGFTLLSRVTGLARETLIARAFGASQYTDAFYVAFRIPNLLRRLSAEGAFSQAFVPILAEFKNQQGHDATKALVDAMSTVLAWALAVLSVVGIAGASWVVFAVASGLHSDGQAFPLAVTMTRIMFPYIVFISLTTLASGVLNTYKSFSLPAFAPVLLNVAFIAAAVFVAPHLKVPVYALAWAVIVGGVLQFLVQLPGLKKVDMVPLIGLNPLRALRHPGVKRVLAKMVPATFAVSVAQLSLIINTNIASRLGQGAVSWINYADRLMEFPTALLGVALGTILLPSLSKAHVDADSHEYSALLDWGLRVTFLLAAPSALALFFFATPLTATLFNYGKFDAHTVTMVARALATYGIGLVGIILIKILAPGFYAKQDIKTPVKIAIGVLIVTQLSNYVFVPLIGHAGLTLSIGVGACLNSLLLFLGLRKRGIYQPSPGWLRFFVQLVGAALVLAGLMHWCAINFDWTGMRAQPLDRIALMAACLVLFAALYFGMLWVMGFKYAYFRRRAK.

11 helical membrane-spanning segments follow: residues 93 to 113 (WALA…VFAV), 133 to 153 (IMFP…VLNT), 159 to 179 (LPAF…VFVA), 188 to 208 (ALAW…LPGL), 233 to 253 (VLAK…SLII), 275 to 295 (LMEF…LPSL), 317 to 337 (VTFL…TPLT), 358 to 378 (LATY…APGF), 390 to 409 (IAIG…VPLI), 448 to 468 (FFVQ…WCAI), and 483 to 503 (IALM…MLWV).

It belongs to the MurJ/MviN family.

It localises to the cell inner membrane. It participates in cell wall biogenesis; peptidoglycan biosynthesis. Its function is as follows. Involved in peptidoglycan biosynthesis. Transports lipid-linked peptidoglycan precursors from the inner to the outer leaflet of the cytoplasmic membrane. The chain is Lipid II flippase MurJ from Burkholderia cenocepacia (strain ATCC BAA-245 / DSM 16553 / LMG 16656 / NCTC 13227 / J2315 / CF5610) (Burkholderia cepacia (strain J2315)).